Consider the following 44-residue polypeptide: U4-ctenitoxin-Pk1a (44 aa).

5 disulfides stabilise this stretch: Cys-4–Cys-18, Cys-11–Cys-24, Cys-15–Cys-42, Cys-17–Cys-33, and Cys-26–Cys-31.

In terms of tissue distribution, expressed by the venom gland.

The protein localises to the secreted. Neurotoxin. Causes spastic paralysis and death in mice within 10 minutes at dose levels of 3 ug per mouse. This chain is U4-ctenitoxin-Pk1a, found in Phoneutria keyserlingi (Brazilian wandering spider).